Here is a 102-residue protein sequence, read N- to C-terminus: Small ribosomal subunit protein uS10 (102 aa).

This sequence belongs to the universal ribosomal protein uS10 family. Part of the 30S ribosomal subunit.

In terms of biological role, involved in the binding of tRNA to the ribosomes. In Desulforamulus reducens (strain ATCC BAA-1160 / DSM 100696 / MI-1) (Desulfotomaculum reducens), this protein is Small ribosomal subunit protein uS10.